The following is a 114-amino-acid chain: Cell division protein FtsB (114 aa).

Over 1–3 (MGK) the chain is Cytoplasmic. A helical membrane pass occupies residues 4-21 (LTLLLVVLLGWLQYSLWV). The Periplasmic segment spans residues 22–114 (GKNGVHDYMR…ASYPSVTASH (93 aa)). A coiled-coil region spans residues 31–62 (RVKQDVATQQANNAKLKSRNDQLFAEIDDLNG).

This sequence belongs to the FtsB family. In terms of assembly, part of a complex composed of FtsB, FtsL and FtsQ.

The protein localises to the cell inner membrane. Its function is as follows. Essential cell division protein. May link together the upstream cell division proteins, which are predominantly cytoplasmic, with the downstream cell division proteins, which are predominantly periplasmic. In Edwardsiella ictaluri (strain 93-146), this protein is Cell division protein FtsB.